The sequence spans 329 residues: Phosphate import ATP-binding protein PstB (329 aa).

Positions 83–325 constitute an ABC transporter domain; that stretch reads FEIENLNFWY…PKQKETNRYI (243 aa). An ATP-binding site is contributed by 116-123; the sequence is GKSGCGKS.

This sequence belongs to the ABC transporter superfamily. Phosphate importer (TC 3.A.1.7) family. As to quaternary structure, the complex is composed of two ATP-binding proteins (PstB), two transmembrane proteins (PstC and PstA) and a solute-binding protein (PstS).

Its subcellular location is the cell membrane. The catalysed reaction is phosphate(out) + ATP + H2O = ADP + 2 phosphate(in) + H(+). Its function is as follows. Part of the ABC transporter complex PstSACB involved in phosphate import. Responsible for energy coupling to the transport system. This is Phosphate import ATP-binding protein PstB from Mycoplasma pneumoniae (strain ATCC 29342 / M129 / Subtype 1) (Mycoplasmoides pneumoniae).